The primary structure comprises 331 residues: D-lactate dehydrogenase (331 aa).

Residues 155-156 (HI), D175, 206-207 (VP), N212, 233-235 (AAR), and D259 contribute to the NAD(+) site. Residue R235 is part of the active site. E264 is an active-site residue. H296 acts as the Proton donor in catalysis.

This sequence belongs to the D-isomer specific 2-hydroxyacid dehydrogenase family. As to quaternary structure, homodimer.

The enzyme catalyses (R)-lactate + NAD(+) = pyruvate + NADH + H(+). This chain is D-lactate dehydrogenase, found in Leuconostoc mesenteroides subsp. cremoris.